The primary structure comprises 253 residues: Phycoerythrobilin:ferredoxin oxidoreductase (253 aa).

Belongs to the HY2 family.

The enzyme catalyses (3Z)-phycoerythrobilin + oxidized 2[4Fe-4S]-[ferredoxin] = 15,16-dihydrobiliverdin + reduced 2[4Fe-4S]-[ferredoxin] + 2 H(+). Its function is as follows. Catalyzes the two-electron reduction of the C2 and C3(1) diene system of 15,16-dihydrobiliverdin. The chain is Phycoerythrobilin:ferredoxin oxidoreductase (pebB) from Prochlorococcus marinus (strain MIT 9215).